The chain runs to 687 residues: MPNLKRLPIPPLQDTLNRYLARVEPLQDERQNRRTRRTVLSAENLDALNTLHERLLEYDARLAESNPESSYIEQFWYDAYLLYDATVVLNVNPYFQLQDDPTIKDTPETAAQGPYGAHTVQVRRAARLTTSILKFIRQIRHGTLRTDTVRGKTPLSMDQYERLFGSSRIPPGPGEPSCHLQTDATSHHVVAMYRGQFYWFDVLDTRNEPIFATPEQLEWNLYSIIMDAESAGSGSAPFGVFTTESRRVWSNIRDYLFHADDCTNWRNLKLIDSALFVVCLDDVAFAADQQDELTRSMLCGTSTINLDPHQHQPPLNVQTGTCLNRWYDKLQLIVTKNGKAGINFEHTGVDGHTVLRLATDIYTDSILSFARGVTKNVVDIFSDDDGKPSSSSLASAAHSANLITIPRKLEWRTDNFLQSSLHFAETRISDLISQYEFVNLDFSNYGASHIKTVFKCSPDAFVQQVFQVAYFALYGRFETVYEPAMTKAFQNGRTEAIRSVTGQSKLFVKSLLDQDASDATKIQLLHDACTAHSQITRECSQGLGQDRHLYALYCLWNQWYKDKLELPPIFRDKSWTTMQNNVLSTSNCGNPCLKSFGFGPVTANGFGIGYIIRDHSVSVVVSSRHRQTARFASLMEKSLLEIDRIFKRQQARAAKPAARTTASANTKSEDMKYLLSGYDYFDVSVSG.

His-346 (proton acceptor) is an active-site residue. 446–459 (GASHIKTVFKCSPD) lines the CoA pocket. Residues Tyr-481 and Thr-494 each contribute to the (R)-carnitine site. At Ser-517 the chain carries Phosphoserine.

This sequence belongs to the carnitine/choline acetyltransferase family.

The protein localises to the mitochondrion inner membrane. The enzyme catalyses (R)-carnitine + acetyl-CoA = O-acetyl-(R)-carnitine + CoA. Involved in the transfer of acetyl-CoA into mitochondria. May also be involved in the metabolism of acetate and of ethanol. This Saccharomyces cerevisiae (strain ATCC 204508 / S288c) (Baker's yeast) protein is Putative mitochondrial carnitine O-acetyltransferase (YAT1).